Consider the following 363-residue polypeptide: Zinc phosphodiesterase ELAC protein 1 (363 aa).

Residues histidine 62, histidine 64, aspartate 66, histidine 67, histidine 182, aspartate 253, and histidine 313 each contribute to the Zn(2+) site. Catalysis depends on aspartate 66, which acts as the Proton acceptor.

The protein belongs to the RNase Z family. As to quaternary structure, homodimer. Zn(2+) is required as a cofactor.

The protein resides in the cytoplasm. Its subcellular location is the cytosol. The protein localises to the nucleus. It carries out the reaction Endonucleolytic cleavage of RNA, removing extra 3' nucleotides from tRNA precursor, generating 3' termini of tRNAs. A 3'-hydroxy group is left at the tRNA terminus and a 5'-phosphoryl group is left at the trailer molecule.. In terms of biological role, zinc phosphodiesterase, which displays some tRNA 3'-processing endonuclease activity. Specifically involved in tRNA repair: acts downstream of the ribosome-associated quality control (RQC) pathway by removing a 2',3'-cyclic phosphate from tRNAs following cleavage by ANKZF1. tRNAs are then processed by TRNT1. In Bos taurus (Bovine), this protein is Zinc phosphodiesterase ELAC protein 1 (ELAC1).